We begin with the raw amino-acid sequence, 437 residues long: Glutamyl-tRNA reductase (437 aa).

Residues 49-52 (TCNR), serine 109, 114-116 (EVQ), and glutamine 120 each bind substrate. Cysteine 50 (nucleophile) is an active-site residue. Residue 189-194 (GAGDTA) coordinates NADP(+).

The protein belongs to the glutamyl-tRNA reductase family. In terms of assembly, homodimer.

It carries out the reaction (S)-4-amino-5-oxopentanoate + tRNA(Glu) + NADP(+) = L-glutamyl-tRNA(Glu) + NADPH + H(+). It participates in porphyrin-containing compound metabolism; protoporphyrin-IX biosynthesis; 5-aminolevulinate from L-glutamyl-tRNA(Glu): step 1/2. Its pathway is porphyrin-containing compound metabolism; chlorophyll biosynthesis. Catalyzes the NADPH-dependent reduction of glutamyl-tRNA(Glu) to glutamate 1-semialdehyde (GSA). This Chloroherpeton thalassium (strain ATCC 35110 / GB-78) protein is Glutamyl-tRNA reductase.